The primary structure comprises 562 residues: MKTHILLARVLACAALVLVTPGYSSEKIPVTGSGFVAKDDSLRTFFDAMALQLKEPVIVSKMAARKKITGNFEFHDPNALLEKLSLQLGLIWYFDGQAIYIYDASEMRNAVVSLRNVSLNEFNNFLKRSGLYNKNYPLRGDNRKGTFYVSGPPVYVDMVVNAATMMDKQNDGIELGRQKIGVMRLNNTFVGDRTYNLRDQKMVIPGIATAIERLLQGEEQPLGNIVSSEPPAMPAFSANGEKGKAANYAGGMSLQEALKQNAAAGNIKIVAYPDTNSLLVKGTAEQVHFIEMLVKALDVAKRHVELSLWIVDLNKSDLERLGTSWSGSITIGDKLGVSLNQSSISTLDGSRFIAAVNALEEKKQATVVSRPVLLTQENVPAIFDNNRTFYTKLIGERNVALEHVTYGTMIRVLPRFSADGQIEMSLDIEDGNDKTPQSDTTTSVDALPEVGRTLISTIARVPHGKSLLVGGYTRDANTDTVQSIPFLGKLPLIGSLFRYSSKNKSNVVRVFMIEPKEIVDPLTPDASESVNNILKQSGAWSGDDKLQKWVRVYLDRGQEAIK.

A signal peptide spans 1–24 (MKTHILLARVLACAALVLVTPGYS).

It belongs to the bacterial secretin family. T3SS SctC subfamily. As to quaternary structure, the core secretion machinery of the T3SS is composed of approximately 20 different proteins, including cytoplasmic components, a base, an export apparatus and a needle. This subunit is part of the base, which anchors the injectisome in the bacterial cell envelope. Forms a stable homooligomeric complex. The complex is composed of 15 subunits.

It localises to the cell outer membrane. Functionally, component of the type III secretion system (T3SS), also called injectisome, which is used to inject bacterial effector proteins into eukaryotic host cells. Forms a ring-shaped multimeric structure with an apparent central pore in the outer membrane. In Salmonella typhimurium (strain LT2 / SGSC1412 / ATCC 700720), this protein is SPI-1 type 3 secretion system secretin.